A 230-amino-acid chain; its full sequence is Cytidylate kinase (230 aa).

Gly-10–Thr-18 provides a ligand contact to ATP.

This sequence belongs to the cytidylate kinase family. Type 1 subfamily.

The protein localises to the cytoplasm. It carries out the reaction CMP + ATP = CDP + ADP. The catalysed reaction is dCMP + ATP = dCDP + ADP. The polypeptide is Cytidylate kinase (Leptospira borgpetersenii serovar Hardjo-bovis (strain L550)).